An 842-amino-acid chain; its full sequence is Homeobox-leucine zipper protein REVOLUTA (842 aa).

The interval 1-20 (MEMAVANHRERSSDSMNRHL) is disordered. Basic and acidic residues predominate over residues 7–20 (NHRERSSDSMNRHL). The segment at residues 22 to 85 (SSGKYVRYTA…NRRCRDKQRK (64 aa)) is a DNA-binding region (homeobox). Residues 90-121 (LQSVNRKLSAMNKLLMEENDRLQKQVSQLVCE) are a coiled coil. In terms of domain architecture, START spans 151-379 (DANSPAGLLS…LAQESNGEVV (229 aa)).

It belongs to the HD-ZIP homeobox family. Class III subfamily. Homodimer. Heterodimer with ZPR1, ZPR2, ZPR3 or ZPR4. Interacts with ESR1 and ESR2. Interacts with ZPR1, ZPR2, ZPR3 and ZPR4. Heterodimerization with ZPR3 prevents DNA binding by REV. As to expression, expressed in the interfascicular regions of stem and vascular bundles of young roots and leaves.

It localises to the nucleus. Functionally, probable transcription factor involved in the regulation of interfascicular fiber (cortical cells) and secondary xylem differentiation in the inflorescence stems. Required for lateral shoot meristems (LSMs) and flower meristems (FMs) initiation. May be involved in the determination of vascular patterning and organ polarity. Directly regulates the expression of AGO10, ZPR1, ZPR2, ZPR3 and ZPR4. Required to regulate adaxial-abaxial polarity and leaf axial patterning. This chain is Homeobox-leucine zipper protein REVOLUTA, found in Arabidopsis thaliana (Mouse-ear cress).